A 338-amino-acid polypeptide reads, in one-letter code: 1-aminocyclopropane-1-carboxylate deaminase (338 aa).

Residue K51 is modified to N6-(pyridoxal phosphate)lysine. The Nucleophile role is filled by S78.

It belongs to the ACC deaminase/D-cysteine desulfhydrase family. As to quaternary structure, homotrimer. Pyridoxal 5'-phosphate serves as cofactor.

It catalyses the reaction 1-aminocyclopropane-1-carboxylate + H2O = 2-oxobutanoate + NH4(+). Its function is as follows. Catalyzes a cyclopropane ring-opening reaction, the irreversible conversion of 1-aminocyclopropane-1-carboxylate (ACC) to ammonia and alpha-ketobutyrate. Allows growth on ACC as a nitrogen source. The chain is 1-aminocyclopropane-1-carboxylate deaminase from Pseudomonas syringae pv. tomato (strain ATCC BAA-871 / DC3000).